The following is a 205-amino-acid chain: Carboxysome shell protein CsoS1D (205 aa).

BMC circularly permuted domains are found at residues 3–100 and 106–205; these read ELRT…TREY and VVMW…TCRS. Positions 68-69 match the Gates the pore motif; that stretch reads ER.

The protein belongs to the EutL/PduB family. Homotrimer. Forms a dimer of stacked trimers, the same faces interact. Probably forms a CsoS1-CsoS1D-CsoS2 complex.

The protein resides in the carboxysome. Functionally, part of the carboxysome shell, a polyhedral inclusion where RuBisCO (ribulose bisphosphate carboxylase, cbbL-cbbS) is sequestered. It may control transport of RuBisCO reactants in and out of the carboxysome. The polypeptide is Carboxysome shell protein CsoS1D (Hydrogenovibrio crunogenus (strain DSM 25203 / XCL-2) (Thiomicrospira crunogena)).